The chain runs to 85 residues: Small ribosomal subunit protein bS18 (85 aa).

The segment covering 1 to 12 has biased composition (gly residues); sequence MAFAQAGGGGGQ. Residues 1-22 are disordered; sequence MAFAQAGGGGGQRRPFFRRRKT.

The protein belongs to the bacterial ribosomal protein bS18 family. Part of the 30S ribosomal subunit. Forms a tight heterodimer with protein bS6.

Its function is as follows. Binds as a heterodimer with protein bS6 to the central domain of the 16S rRNA, where it helps stabilize the platform of the 30S subunit. The sequence is that of Small ribosomal subunit protein bS18 from Azorhizobium caulinodans (strain ATCC 43989 / DSM 5975 / JCM 20966 / LMG 6465 / NBRC 14845 / NCIMB 13405 / ORS 571).